The chain runs to 876 residues: Liprin-beta-2 (876 aa).

Residues 101 to 313 (AASNETYQER…TGLLNQYRKV (213 aa)) are a coiled coil. A phosphoserine mark is found at Ser-329, Ser-363, and Ser-387. The interval 356 to 376 (EMPPRCSSPTVGPPPLPQKSL) is disordered. 2 disordered regions span residues 425–451 (LPGK…PDAT) and 470–500 (VVND…PKGI). Polar residues predominate over residues 473–489 (DLSSTSSGTESGPQSPL). Ser-512 carries the phosphoserine modification. A disordered region spans residues 527 to 553 (RGGLRATAGPRLSRTRDSKGQKSDANA). SAM domains lie at 558–622 (WSTE…INTK), 630–693 (LDHI…LHVN), and 718–783 (WSNH…KFNA).

Belongs to the liprin family. Liprin-beta subfamily. Forms homodimers and heterodimers. Widely expressed.

Its function is as follows. May regulate the disassembly of focal adhesions. Did not bind receptor-like tyrosine phosphatases type 2A. In Homo sapiens (Human), this protein is Liprin-beta-2 (PPFIBP2).